Reading from the N-terminus, the 262-residue chain is Expansin-A7 (262 aa).

Residues 1 to 30 form the signal peptide; sequence MGPISSSWSFNKFFSIVFVVFAISGEFVAG. The 113-residue stretch at 55 to 167 folds into the Expansin-like EG45 domain; it reads GGACGYGNLF…RRVPCQRSGG (113 aa). 3 disulfides stabilise this stretch: Cys58-Cys86, Cys89-Cys162, and Cys94-Cys100. The Expansin-like CBD domain maps to 177 to 257; it reads YWLLIFVMNV…NWSGGKTYKS (81 aa).

The protein belongs to the expansin family. Expansin A subfamily.

The protein localises to the secreted. Its subcellular location is the cell wall. It is found in the membrane. Functionally, causes loosening and extension of plant cell walls by disrupting non-covalent bonding between cellulose microfibrils and matrix glucans. No enzymatic activity has been found. The polypeptide is Expansin-A7 (EXPA7) (Arabidopsis thaliana (Mouse-ear cress)).